Here is a 212-residue protein sequence, read N- to C-terminus: Bcl-2-related ovarian killer protein (212 aa).

A Phosphoserine modification is found at Ser7. Residues 15–45 are interactions with ITPR1; sequence MDAFDRSPTDKELVAQAKALGREYVHARLLR. Residues Lys25 and Lys32 each participate in a glycyl lysine isopeptide (Lys-Gly) (interchain with G-Cter in ubiquitin) cross-link. Residues 32–44 carry the BH4 motif; the sequence is KALGREYVHARLL. Positions 66 to 82 match the BH3 motif; it reads VCAVLLRLGDELEMIRP. The nuclear export signal stretch occupies residues 70–78; the sequence is LLRLGDELE. Positions 112–131 match the BH1 motif; the sequence is HIFSAGITWGKVVSLYAVAA. Residues Lys159 and Lys176 each participate in a glycyl lysine isopeptide (Lys-Gly) (interchain with G-Cter in ubiquitin) cross-link. The BH2 signature appears at 164 to 178; sequence WLRRRGGWTDVLKCV. Residues 189-209 traverse the membrane as a helical segment; the sequence is WLVAALCSFGRFLKAAFFVLL.

It belongs to the Bcl-2 family. Monomer; positively regulates apoptotic process. Homodimer. Heterodimer. Oligomer; promoted by apoptotic stimuli and BH3-only proteins; mediates constitutive activation. Interacts (via BH4 domain) with ITPR1; enhances BOK expression and stabilization; limits apoptosis and prevents ubiquitination and then degradation; protects ITPR1 from proteolysis by CASP3 during apoptosis. Interacts with ITPR2 and ITPR3; binds most strongly to ITPR2, and barely to ITPR3; regulates their expression. Interacts with XPO1; translocates to the cytoplasm. Interacts with BNIP3; promotes oligomerization. Ubiquitinated by AMFR/gp78 E3 ubiquitin ligase complex; mediates degradation by ubiquitin-proteasome pathway in a VCP/p97-dependent manner; prevents from pro-apoptotic activity; promotes degradation of newly synthesized proteins that are not ITPR1 associated. As to expression, expressed mainly in oocytes; weak expression in granulosa cells of the developing follicles. In adult human ovaries, expressed in granulosa cells at all follicular stages, but expression in primordial/primary follicles granulosa cell is stronger than in secondary and antral follicles.

The protein localises to the mitochondrion membrane. It is found in the endoplasmic reticulum membrane. Its subcellular location is the mitochondrion inner membrane. It localises to the cytoplasm. The protein resides in the nucleus. The protein localises to the mitochondrion. It is found in the endoplasmic reticulum. Its subcellular location is the mitochondrion outer membrane. It localises to the early endosome membrane. The protein resides in the recycling endosome membrane. The protein localises to the nucleus outer membrane. It is found in the golgi apparatus. Its subcellular location is the cis-Golgi network membrane. It localises to the trans-Golgi network membrane. The protein resides in the membrane. Apoptosis regulator that functions through different apoptotic signaling pathways. Plays a roles as pro-apoptotic protein that positively regulates intrinsic apoptotic process in a BAX- and BAK1-dependent manner or in a BAX- and BAK1-independent manner. In response to endoplasmic reticulum stress promotes mitochondrial apoptosis through downstream BAX/BAK1 activation and positive regulation of PERK-mediated unfolded protein response. Activates apoptosis independently of heterodimerization with survival-promoting BCL2 and BCL2L1 through induction of mitochondrial outer membrane permeabilization, in a BAX- and BAK1-independent manner, in response to inhibition of ERAD-proteasome degradation system, resulting in cytochrome c release. In response to DNA damage, mediates intrinsic apoptotic process in a TP53-dependent manner. Plays a role in granulosa cell apoptosis by CASP3 activation. Plays a roles as anti-apoptotic protein during neuronal apoptotic process, by negatively regulating poly ADP-ribose polymerase-dependent cell death through regulation of neuronal calcium homeostasis and mitochondrial bioenergetics in response to NMDA excitation. In addition to its role in apoptosis, may regulate trophoblast cell proliferation during the early stages of placental development, by acting on G1/S transition through regulation of CCNE1 expression. May also play a role as an inducer of autophagy by disrupting interaction between MCL1 and BECN1. Its function is as follows. Pro-apoptotic molecule exerting its function through the mitochondrial pathway. This is Bcl-2-related ovarian killer protein from Homo sapiens (Human).